The sequence spans 417 residues: MEFVKCLGHPEEFYNLLRFQMGGRRKVIPKMDQDSLSSSLKTCYKYLNQTSRSFAAVIQALDGEMRHAVCIFYLVLRALDTLEDDMTISIERKVPLLHNFHSYLYEPDWRFTESKEKDRQVLEDFPTISLEFRNLAEKYQTVIVDVCQKMGFGMAEFLDKRVTSEREWDKYCHYVAGLVGIGLSRLFPASELEDPLIGEDTERANSMGLFLQKTNIIRDYLEDQREGREFWPQETWSKYVKKLGDFAKPENIDLAVQCLNELITNTLHHIPDVITYLSRLRNQSIFNFCAIPQVMAIATLAACYNNQQVFKGVVKIRKGQAVTLMMDATNMPAVKAIIHQYMEEIYHRIPNSDPCSTKTQQIISTIRTQNLPNCQLVSRSHYSPIYLSFVMLLAALSWQYLSTLSQVTEDYVQTGEH.

Residues Arg52 and Arg77 each contribute to the NADP(+) site. Mg(2+)-binding residues include Asp80, Glu83, and Asp84. An NADP(+)-binding site is contributed by Arg218. The helical transmembrane segment at 284–304 (SIFNFCAIPQVMAIATLAACY) threads the bilayer. The NADP(+) site is built by Lys315 and Arg317. Residues 384-404 (PIYLSFVMLLAALSWQYLSTL) form a helical membrane-spanning segment.

Belongs to the phytoene/squalene synthase family. Mg(2+) serves as cofactor.

It is found in the endoplasmic reticulum membrane. The catalysed reaction is 2 (2E,6E)-farnesyl diphosphate + NADPH + H(+) = squalene + 2 diphosphate + NADP(+). The enzyme catalyses 2 (2E,6E)-farnesyl diphosphate + NADH + H(+) = squalene + 2 diphosphate + NAD(+). It carries out the reaction presqualene diphosphate + NADH + H(+) = squalene + diphosphate + NAD(+). It catalyses the reaction presqualene diphosphate + NADPH + H(+) = squalene + diphosphate + NADP(+). The catalysed reaction is 2 (2E,6E)-farnesyl diphosphate = presqualene diphosphate + diphosphate. It participates in terpene metabolism; lanosterol biosynthesis; lanosterol from farnesyl diphosphate: step 1/3. In terms of biological role, catalyzes the condensation of 2 farnesyl pyrophosphate (FPP) moieties to form squalene. Proceeds in two distinct steps. In the first half-reaction, two molecules of FPP react to form the stable presqualene diphosphate intermediate (PSQPP), with concomitant release of a proton and a molecule of inorganic diphosphate. In the second half-reaction, PSQPP undergoes heterolysis, isomerization, and reduction with NADPH or NADH to form squalene. It is the first committed enzyme of the sterol biosynthesis pathway. This Bos taurus (Bovine) protein is Squalene synthase (FDFT1).